Reading from the N-terminus, the 730-residue chain is ABC transporter G family member 20 (730 aa).

An ABC transporter domain is found at 15–244; the sequence is ISLKNVCRGY…YESQTLEEVF (230 aa). Residue 47-54 participates in ATP binding; sequence GASGSGKT. A disordered region spans residues 281–303; sequence VNNNNNNNNNNNNNNYNNNDDEE. The span at 282-298 shows a compositional bias: low complexity; sequence NNNNNNNNNNNNNNYNN. In terms of domain architecture, ABC transmembrane type-2 spans 489-717; it reads SFETLAKQQA…FIAVLALNEK (229 aa). 5 helical membrane passes run 520–540, 572–592, 602–622, 634–654, and 692–712; these read FIDFLAPGMVCLISFAHAISI, FLGHLPLLLVQITVLLLIAIY, IALVFLMTVSLAFVGMSLGLV, IQLSLGVYFPTLICSGTLWPL, and VWVAFLVVLSWLIFLIFIAVL.

The protein belongs to the ABC transporter superfamily.

It localises to the membrane. This Dictyostelium discoideum (Social amoeba) protein is ABC transporter G family member 20 (abcG20).